The primary structure comprises 566 residues: Cytoplasmic polyadenylation element-binding protein 2 (566 aa).

Disordered stretches follow at residues 17 to 46 (FWGN…SVEG) and 64 to 98 (LERL…IQEQ). Residues 87 to 98 (DSEEEEEDIQEQ) show a composition bias toward acidic residues. Residues 430 to 512 (MVAFIGGVPR…KRVEIKPYFF (83 aa)) enclose the RRM domain.

Its function is as follows. Cytoplasmic polyadenylation element binding protein that binds to and regulates the translation of specific mRNAs. The polypeptide is Cytoplasmic polyadenylation element-binding protein 2 (cpb-2) (Caenorhabditis briggsae).